A 446-amino-acid polypeptide reads, in one-letter code: Nuclear envelope morphology protein 1 (446 aa).

The interval 53 to 80 (VDQQYDHSSSHLKESDQNQERKNSVPKK) is disordered. A compositionally biased stretch (basic and acidic residues) spans 56–75 (QYDHSSSHLKESDQNQERKN). Residues 87–103 (ILIEKIASILWALLLFL) form a helical membrane-spanning segment. The disordered stretch occupies residues 132 to 168 (HTDKRNRGSNASENELPVSSSNINDSSEKTNPKNCNL). The span at 139 to 156 (GSNASENELPVSSSNIND) shows a compositional bias: polar residues. The FCP1 homology domain occupies 247–424 (NTQKKKKLVI…LNLLPFLEAM (178 aa)).

It belongs to the Dullard family. Component of the NEM1-SPO7 complex.

It localises to the endoplasmic reticulum membrane. The protein localises to the nucleus membrane. The catalysed reaction is O-phospho-L-seryl-[protein] + H2O = L-seryl-[protein] + phosphate. The enzyme catalyses O-phospho-L-threonyl-[protein] + H2O = L-threonyl-[protein] + phosphate. In terms of biological role, catalytic component of the NEM1-SPO7 complex which acts as a phosphatase and dephosphorylates the phosphatidic acid phosphohydrolase PAH1. Essential for the formation of a spherical nucleus and meiotic division. The NEM1-SPOo7 protein phosphatase is required for efficient mitophagy under prolonged respiration, as well as for reticulophagy and pexophagy. This is Nuclear envelope morphology protein 1 (NEM1) from Saccharomyces cerevisiae (strain ATCC 204508 / S288c) (Baker's yeast).